Here is a 496-residue protein sequence, read N- to C-terminus: Glycerol kinase (496 aa).

Thr12 serves as a coordination point for ADP. 3 residues coordinate ATP: Thr12, Thr13, and Ser14. Thr12 contributes to the sn-glycerol 3-phosphate binding site. An ADP-binding site is contributed by Arg16. Sn-glycerol 3-phosphate-binding residues include Arg82, Glu83, and Tyr134. The glycerol site is built by Arg82, Glu83, and Tyr134. Residue His230 is modified to Phosphohistidine; by HPr. Residue Asp244 coordinates sn-glycerol 3-phosphate. Glycerol-binding residues include Asp244 and Gln245. ADP-binding residues include Thr266 and Gly309. Thr266, Gly309, Gln313, and Gly410 together coordinate ATP. Positions 410 and 414 each coordinate ADP.

The protein belongs to the FGGY kinase family. As to quaternary structure, homotetramer and homodimer (in equilibrium). The phosphoenolpyruvate-dependent sugar phosphotransferase system (PTS), including enzyme I, and histidine-containing protein (HPr) are required for the phosphorylation, which leads to the activation of the enzyme.

It carries out the reaction glycerol + ATP = sn-glycerol 3-phosphate + ADP + H(+). The protein operates within polyol metabolism; glycerol degradation via glycerol kinase pathway; sn-glycerol 3-phosphate from glycerol: step 1/1. With respect to regulation, activated by phosphorylation and inhibited by fructose 1,6-bisphosphate (FBP). Key enzyme in the regulation of glycerol uptake and metabolism. Catalyzes the phosphorylation of glycerol to yield sn-glycerol 3-phosphate. In Bacillus thuringiensis subsp. konkukian (strain 97-27), this protein is Glycerol kinase.